The following is a 556-amino-acid chain: Beta-caryophyllene synthase TPS9FN (556 aa).

Residues arginine 273, aspartate 310, aspartate 314, arginine 451, and aspartate 454 each contribute to the (2E,6E)-farnesyl diphosphate site. Mg(2+) contacts are provided by aspartate 310 and aspartate 314. The short motif at 310–314 (DDIYD) is the DDXXD motif element. Residues aspartate 454, serine 458, and glutamate 462 each coordinate Mg(2+).

The protein belongs to the terpene synthase family. Tpsb subfamily. The cofactor is Mg(2+). Mn(2+) serves as cofactor. As to expression, expressed in glandular trichomes two to four weeks after flowering onset.

The catalysed reaction is (2E,6E)-farnesyl diphosphate = (-)-(E)-beta-caryophyllene + diphosphate. It carries out the reaction (2E,6E)-farnesyl diphosphate = alpha-humulene + diphosphate. Its pathway is secondary metabolite biosynthesis; terpenoid biosynthesis. Involved in sesquiterpene olefins biosynthesis, constituants of cannabinoids and terpenoids-rich resins. Catalyzes mainly the conversion of (2E)-farnesyl diphosphate to beta-caryophyllene and alpha-humulene. Can also use (2E)-geranyl diphosphate as substrate with low efficiency. The sequence is that of Beta-caryophyllene synthase TPS9FN from Cannabis sativa (Hemp).